The primary structure comprises 300 residues: Ribosomal protein L11 methyltransferase (300 aa).

S-adenosyl-L-methionine is bound by residues Thr-152, Gly-173, Asp-195, and Asn-234.

It belongs to the methyltransferase superfamily. PrmA family.

The protein resides in the cytoplasm. It catalyses the reaction L-lysyl-[protein] + 3 S-adenosyl-L-methionine = N(6),N(6),N(6)-trimethyl-L-lysyl-[protein] + 3 S-adenosyl-L-homocysteine + 3 H(+). Methylates ribosomal protein L11. This is Ribosomal protein L11 methyltransferase from Paraburkholderia phymatum (strain DSM 17167 / CIP 108236 / LMG 21445 / STM815) (Burkholderia phymatum).